The chain runs to 472 residues: E3 ubiquitin-protein ligase MYLIP-A (472 aa).

One can recognise an FERM domain in the interval 1 to 279 (MLCHVTRPDA…ETHAFYRCDT (279 aa)). Residues 384-419 (CMLCCEEEIDAAFCPCGHMVCCQNCAAQLQSCPVCR) form an RING-type zinc finger.

As to quaternary structure, interacts with anxa5. Ubiquitous.

Its subcellular location is the cytoplasm. It is found in the cytosol. It carries out the reaction S-ubiquitinyl-[E2 ubiquitin-conjugating enzyme]-L-cysteine + [acceptor protein]-L-lysine = [E2 ubiquitin-conjugating enzyme]-L-cysteine + N(6)-ubiquitinyl-[acceptor protein]-L-lysine.. The protein operates within protein modification; protein ubiquitination. In terms of biological role, E3 ubiquitin-protein ligase that mediates ubiquitination and subsequent proteasomal degradation of myosin regulatory light chain (MRLC). Regulates cell movements during gastrulation by acting downstream of fz7 to antagonize the frizzled-signaling pathway. In Danio rerio (Zebrafish), this protein is E3 ubiquitin-protein ligase MYLIP-A (mylipa).